The following is an 89-amino-acid chain: Small ribosomal subunit protein uS15 (89 aa).

It belongs to the universal ribosomal protein uS15 family. As to quaternary structure, part of the 30S ribosomal subunit. Forms a bridge to the 50S subunit in the 70S ribosome, contacting the 23S rRNA.

One of the primary rRNA binding proteins, it binds directly to 16S rRNA where it helps nucleate assembly of the platform of the 30S subunit by binding and bridging several RNA helices of the 16S rRNA. Functionally, forms an intersubunit bridge (bridge B4) with the 23S rRNA of the 50S subunit in the ribosome. This chain is Small ribosomal subunit protein uS15, found in Exiguobacterium sibiricum (strain DSM 17290 / CCUG 55495 / CIP 109462 / JCM 13490 / 255-15).